The following is a 292-amino-acid chain: Protoheme IX farnesyltransferase (292 aa).

A run of 9 helical transmembrane segments spans residues 12 to 32 (ITWL…PQAS), 43 to 63 (LLRL…TAAL), 94 to 114 (LAFG…GVNL), 115 to 135 (LSAG…TPMK), 144 to 164 (VGAI…AGGL), 169 to 189 (WVLF…IAWM), 216 to 236 (IVIY…LGMS), 239 to 259 (LYLV…VRVA), and 267 to 287 (ARGV…LMLL).

It belongs to the UbiA prenyltransferase family. Protoheme IX farnesyltransferase subfamily.

It localises to the cell inner membrane. The catalysed reaction is heme b + (2E,6E)-farnesyl diphosphate + H2O = Fe(II)-heme o + diphosphate. It participates in porphyrin-containing compound metabolism; heme O biosynthesis; heme O from protoheme: step 1/1. Converts heme B (protoheme IX) to heme O by substitution of the vinyl group on carbon 2 of heme B porphyrin ring with a hydroxyethyl farnesyl side group. The sequence is that of Protoheme IX farnesyltransferase from Solibacter usitatus (strain Ellin6076).